A 205-amino-acid polypeptide reads, in one-letter code: Holliday junction branch migration complex subunit RuvA (205 aa).

The interval 1-64 (MIGKLKGVVD…EDQIRLFGFS (64 aa)) is domain I. The segment at 65 to 143 (SAAERDWFRL…GFSASEPLAA (79 aa)) is domain II. A flexible linker region spans residues 144–152 (QLGGGGVAS). Positions 153–205 (AQGGAAADAVSALVNLGYGVPQANAAIAAALRGAGEGAKTEVLIRLGLKELAK) are domain III.

It belongs to the RuvA family. As to quaternary structure, homotetramer. Forms an RuvA(8)-RuvB(12)-Holliday junction (HJ) complex. HJ DNA is sandwiched between 2 RuvA tetramers; dsDNA enters through RuvA and exits via RuvB. An RuvB hexamer assembles on each DNA strand where it exits the tetramer. Each RuvB hexamer is contacted by two RuvA subunits (via domain III) on 2 adjacent RuvB subunits; this complex drives branch migration. In the full resolvosome a probable DNA-RuvA(4)-RuvB(12)-RuvC(2) complex forms which resolves the HJ.

It localises to the cytoplasm. Functionally, the RuvA-RuvB-RuvC complex processes Holliday junction (HJ) DNA during genetic recombination and DNA repair, while the RuvA-RuvB complex plays an important role in the rescue of blocked DNA replication forks via replication fork reversal (RFR). RuvA specifically binds to HJ cruciform DNA, conferring on it an open structure. The RuvB hexamer acts as an ATP-dependent pump, pulling dsDNA into and through the RuvAB complex. HJ branch migration allows RuvC to scan DNA until it finds its consensus sequence, where it cleaves and resolves the cruciform DNA. This is Holliday junction branch migration complex subunit RuvA from Xanthobacter autotrophicus (strain ATCC BAA-1158 / Py2).